A 420-amino-acid chain; its full sequence is Gamma-glutamyl phosphate reductase (420 aa).

It belongs to the gamma-glutamyl phosphate reductase family.

The protein resides in the cytoplasm. The catalysed reaction is L-glutamate 5-semialdehyde + phosphate + NADP(+) = L-glutamyl 5-phosphate + NADPH + H(+). It functions in the pathway amino-acid biosynthesis; L-proline biosynthesis; L-glutamate 5-semialdehyde from L-glutamate: step 2/2. Catalyzes the NADPH-dependent reduction of L-glutamate 5-phosphate into L-glutamate 5-semialdehyde and phosphate. The product spontaneously undergoes cyclization to form 1-pyrroline-5-carboxylate. The chain is Gamma-glutamyl phosphate reductase from Alkalilimnicola ehrlichii (strain ATCC BAA-1101 / DSM 17681 / MLHE-1).